The sequence spans 298 residues: UDP-3-O-acyl-N-acetylglucosamine deacetylase (298 aa).

Positions 80, 239, and 243 each coordinate Zn(2+). The active-site Proton donor is His-266.

This sequence belongs to the LpxC family. Zn(2+) serves as cofactor.

It carries out the reaction a UDP-3-O-[(3R)-3-hydroxyacyl]-N-acetyl-alpha-D-glucosamine + H2O = a UDP-3-O-[(3R)-3-hydroxyacyl]-alpha-D-glucosamine + acetate. It participates in glycolipid biosynthesis; lipid IV(A) biosynthesis; lipid IV(A) from (3R)-3-hydroxytetradecanoyl-[acyl-carrier-protein] and UDP-N-acetyl-alpha-D-glucosamine: step 2/6. Catalyzes the hydrolysis of UDP-3-O-myristoyl-N-acetylglucosamine to form UDP-3-O-myristoylglucosamine and acetate, the committed step in lipid A biosynthesis. In Blochmanniella floridana, this protein is UDP-3-O-acyl-N-acetylglucosamine deacetylase.